The chain runs to 258 residues: Snake venom serine protease catroxase-2 (258 aa).

Residues 1–18 (MVLIRVLANLLILQLSYA) form the signal peptide. Residues 19-24 (QKSSEL) constitute a propeptide that is removed on maturation. The Peptidase S1 domain occupies 25–249 (VVGGDECNIN…YNDWIQSIIA (225 aa)). 6 disulfides stabilise this stretch: Cys31–Cys163, Cys50–Cys66, Cys98–Cys256, Cys142–Cys210, Cys174–Cys189, and Cys200–Cys225. Asn44 is a glycosylation site (N-linked (GlcNAc...) asparagine). Catalysis depends on charge relay system residues His65 and Asp110. Ser204 acts as the Charge relay system in catalysis.

This sequence belongs to the peptidase S1 family. Snake venom subfamily. As to quaternary structure, monomer. In terms of tissue distribution, expressed by the venom gland.

It localises to the secreted. Functionally, snake venom serine protease that may act in the hemostasis system of the prey. This Crotalus atrox (Western diamondback rattlesnake) protein is Snake venom serine protease catroxase-2.